Reading from the N-terminus, the 520-residue chain is GMP synthase [glutamine-hydrolyzing] (520 aa).

A Glutamine amidotransferase type-1 domain is found at 8–202 (RLLIIDFGSQ…FVRLAGFSGD (195 aa)). Catalysis depends on C86, which acts as the Nucleophile. Active-site residues include H177 and E179. One can recognise a GMPS ATP-PPase domain in the interval 203–395 (WTMGAYREQM…LGLPDSFIGR (193 aa)). An ATP-binding site is contributed by 230 to 236 (SGGVDSS).

As to quaternary structure, homodimer.

It catalyses the reaction XMP + L-glutamine + ATP + H2O = GMP + L-glutamate + AMP + diphosphate + 2 H(+). The protein operates within purine metabolism; GMP biosynthesis; GMP from XMP (L-Gln route): step 1/1. In terms of biological role, catalyzes the synthesis of GMP from XMP. The polypeptide is GMP synthase [glutamine-hydrolyzing] (Ruegeria sp. (strain TM1040) (Silicibacter sp.)).